Reading from the N-terminus, the 598-residue chain is Transcriptional repressor tup12 (598 aa).

Residues 118–177 are disordered; the sequence is IASGVVPQSSKTKHGRNSVSFGKYGNAGPFNSDNSSKPLILNNGSSGGTPKNLRSPAIDS. 7 WD repeats span residues 285-325, 332-371, 374-413, 415-454, 456-495, 510-549, and 552-585; these read EPPI…AMVF, LITL…QQIR, DIAQ…RTVC, WDVE…KVIR, WTSS…NTIK, YKEG…RTIQ, and SPDS…ATGS.

Belongs to the WD repeat TUP1 family.

Transcriptional repressor. The protein is Transcriptional repressor tup12 (tup12) of Schizosaccharomyces pombe (strain 972 / ATCC 24843) (Fission yeast).